The following is a 261-amino-acid chain: Ribosomal RNA small subunit methyltransferase J (261 aa).

S-adenosyl-L-methionine-binding positions include 111-112 (RD), 127-128 (ER), 163-164 (SS), and Asp181.

The protein belongs to the methyltransferase superfamily. RsmJ family.

It is found in the cytoplasm. The enzyme catalyses guanosine(1516) in 16S rRNA + S-adenosyl-L-methionine = N(2)-methylguanosine(1516) in 16S rRNA + S-adenosyl-L-homocysteine + H(+). In terms of biological role, specifically methylates the guanosine in position 1516 of 16S rRNA. In Shewanella sp. (strain MR-4), this protein is Ribosomal RNA small subunit methyltransferase J.